The following is a 393-amino-acid chain: NAD(P)H-quinone oxidoreductase subunit H, chloroplastic (393 aa).

Belongs to the complex I 49 kDa subunit family. NDH is composed of at least 16 different subunits, 5 of which are encoded in the nucleus.

It is found in the plastid. It localises to the chloroplast thylakoid membrane. It catalyses the reaction a plastoquinone + NADH + (n+1) H(+)(in) = a plastoquinol + NAD(+) + n H(+)(out). The catalysed reaction is a plastoquinone + NADPH + (n+1) H(+)(in) = a plastoquinol + NADP(+) + n H(+)(out). Functionally, NDH shuttles electrons from NAD(P)H:plastoquinone, via FMN and iron-sulfur (Fe-S) centers, to quinones in the photosynthetic chain and possibly in a chloroplast respiratory chain. The immediate electron acceptor for the enzyme in this species is believed to be plastoquinone. Couples the redox reaction to proton translocation, and thus conserves the redox energy in a proton gradient. The polypeptide is NAD(P)H-quinone oxidoreductase subunit H, chloroplastic (Drimys granadensis).